Reading from the N-terminus, the 204-residue chain is UPF0637 protein lmo1065 (204 aa).

This sequence belongs to the UPF0637 family.

The protein is UPF0637 protein lmo1065 of Listeria monocytogenes serovar 1/2a (strain ATCC BAA-679 / EGD-e).